The sequence spans 105 residues: Large ribosomal subunit protein bL21 (105 aa).

This sequence belongs to the bacterial ribosomal protein bL21 family. In terms of assembly, part of the 50S ribosomal subunit. Contacts protein L20.

Functionally, this protein binds to 23S rRNA in the presence of protein L20. The polypeptide is Large ribosomal subunit protein bL21 (Rickettsia canadensis (strain McKiel)).